The following is a 569-amino-acid chain: MAASSLSLSSPLSNPLRRFTLHHLHLSKKPLSSSSLFLCSAAKMNDHIHRVPALTEEEIDSVAIKTFERYALPSSSSVKRKGKGVTILWFRNDLRVLDNDALYKAWSSSDTILPVYCLDPRLFHTTHFFNFPKTGALRGGFLMECLVDLRKNLMKRGLNLLIRSGKPEEILPSLAKDFGARTVFAHKETCSEEVDVERLVNQGLKRVGNSTKLELIWGSTMYHKDDLPFDVFDLPDVYTQFRKSVEAKCSIRSSTRIPLSLGPTPSVDDWGDVPTLEKLGVEPQEVTRGMRFVGGESAGVGRVFEYFWKKDLLKVYKETRNGMLGPDYSTKFSPWLAFGCISPRFIYEEVQRYEKERVANNSTYWVLFELIWRDYFRFLSIKCGNSLFHLGGPRNVQGKWSQDQKLFESWRDAKTGYPLIDANMKELSTTGFMSNRGRQIVCSFLVRDMGLDWRMGAEWFETCLLDYDPCSNYGNWTYGAGVGNDPREDRYFSIPKQAQNYDPEGEYVAFWLQQLRRLPKEKRHWPGRLMYMDTVVPLKHGNGPMAGGSKSGGGFRGSHSGRRSRHNGP.

A Photolyase/cryptochrome alpha/beta domain is found at 84–221 (GVTILWFRND…KLELIWGSTM (138 aa)). FAD is bound by residues tyrosine 316 and 329–333 (STKFS). An ATP-binding site is contributed by arginine 436. Residues aspartate 466 and aspartate 468 each coordinate FAD. Residue aspartate 485 coordinates ATP. The segment at 541–569 (GNGPMAGGSKSGGGFRGSHSGRRSRHNGP) is disordered. Positions 544–556 (PMAGGSKSGGGFR) are enriched in gly residues. Positions 559–569 (HSGRRSRHNGP) are enriched in basic residues.

Belongs to the DNA photolyase class-1 family. As to quaternary structure, homodimer. FAD is required as a cofactor. (6R)-5,10-methylene-5,6,7,8-tetrahydrofolate serves as cofactor.

The protein resides in the plastid. It localises to the chloroplast. It is found in the mitochondrion. Its function is as follows. May have a photoreceptor function. Binds ss- and ds-DNA in a sequence non-specific manner. Has a photolyase activity specific for cyclobutane pyrimidine dimers in ssDNA. The protein is Cryptochrome DASH, chloroplastic/mitochondrial (CRYD) of Arabidopsis thaliana (Mouse-ear cress).